The following is a 37-amino-acid chain: Large ribosomal subunit protein bL36c (37 aa).

The protein belongs to the bacterial ribosomal protein bL36 family.

Its subcellular location is the plastid. The protein localises to the chloroplast. The polypeptide is Large ribosomal subunit protein bL36c (rpl36) (Porphyra purpurea (Red seaweed)).